A 256-amino-acid polypeptide reads, in one-letter code: Deoxyribose-phosphate aldolase (256 aa).

Asp-102 (proton donor/acceptor) is an active-site residue. Catalysis depends on Lys-165, which acts as the Schiff-base intermediate with acetaldehyde. Lys-197 serves as the catalytic Proton donor/acceptor.

This sequence belongs to the DeoC/FbaB aldolase family. DeoC type 2 subfamily.

It localises to the cytoplasm. The catalysed reaction is 2-deoxy-D-ribose 5-phosphate = D-glyceraldehyde 3-phosphate + acetaldehyde. Its pathway is carbohydrate degradation; 2-deoxy-D-ribose 1-phosphate degradation; D-glyceraldehyde 3-phosphate and acetaldehyde from 2-deoxy-alpha-D-ribose 1-phosphate: step 2/2. Functionally, catalyzes a reversible aldol reaction between acetaldehyde and D-glyceraldehyde 3-phosphate to generate 2-deoxy-D-ribose 5-phosphate. In Shewanella oneidensis (strain ATCC 700550 / JCM 31522 / CIP 106686 / LMG 19005 / NCIMB 14063 / MR-1), this protein is Deoxyribose-phosphate aldolase.